A 512-amino-acid polypeptide reads, in one-letter code: Dihydroniloticin synthase CYP71CD1 (512 aa).

Residues 7–27 (YFTVTSLLVFLTFLLRLVWGW) traverse the membrane as a helical segment. Cysteine 451 lines the heme pocket.

This sequence belongs to the cytochrome P450 family. Requires heme as cofactor. Accumulates in mature fruits and in juice vesicles.

The protein localises to the membrane. The enzyme catalyses tirucalla-7,24-dien-3beta-ol + 2 reduced [NADPH--hemoprotein reductase] + 2 O2 = dihydroniloticin + 2 oxidized [NADPH--hemoprotein reductase] + 2 H2O + 2 H(+). It participates in secondary metabolite biosynthesis; terpenoid biosynthesis. Functionally, monooxygenase involved in the biosynthesis of limonoids triterpene natural products such as limonin, a compound with insecticidal activity responsible for the bitter taste in citrus. Catalyzes the conversion of tirucalladienol to dihydroniloticin. In Citrus sinensis (Sweet orange), this protein is Dihydroniloticin synthase CYP71CD1.